Here is a 452-residue protein sequence, read N- to C-terminus: Major royal jelly protein 2 (452 aa).

The first 17 residues, 1–17 (MTRWLFMVACLGIACQG), serve as a signal peptide directing secretion. N-linked (GlcNAc...) asparagine glycans are attached at residues Asn145 and Asn178. Residues 416–452 (NNNQNDNIQNTNNQNDNNQKNNKKNANNQKNNNQNDN) form a disordered region.

In terms of processing, N-linked core structure contains mannose (which consists of 8-alpha-mannosyl residues, one beta-mannosyl residue, and chitobiose). In terms of tissue distribution, secreted from the hypopharyngeal glands of the worker honey bee (at protein level); expression peaks at 12 days post eclosion. Expressed in the brains of adult worker bees peaking at 12 days post eclosion (at protein level). Expressed in the spermatheca of adult queen bees (at protein level); Expression levels are higher in mated queens than in virgin queens.

Its subcellular location is the secreted. Its function is as follows. Highly abundant protein component of royal jelly, a substance produced in the hypopharyngeal gland containing proteins, free amino acids, fatty acids, sugars and other nutrients, which is fed to developing larvae by worker nurse bees. Major royal jelly proteins (MRJPs) are high in essential amino acids and probably have a nutritional function in larval food. All larvae are fed some royal jelly (also known as worker jelly) early in their development but it forms the principal source of nutrition for larvae destined to become queen bees. Produced in the spermatheca of adult queen bees, along with other major royal jelly proteins, where it may act as a nutrient supply for sperm stored by mated queens, or be involved in energy metabolism. The chain is Major royal jelly protein 2 from Apis mellifera (Honeybee).